A 259-amino-acid polypeptide reads, in one-letter code: Acyl-[acyl-carrier-protein]--UDP-N-acetylglucosamine O-acyltransferase (259 aa).

Belongs to the transferase hexapeptide repeat family. LpxA subfamily. As to quaternary structure, homotrimer.

Its subcellular location is the cytoplasm. It carries out the reaction a (3R)-hydroxyacyl-[ACP] + UDP-N-acetyl-alpha-D-glucosamine = a UDP-3-O-[(3R)-3-hydroxyacyl]-N-acetyl-alpha-D-glucosamine + holo-[ACP]. It functions in the pathway glycolipid biosynthesis; lipid IV(A) biosynthesis; lipid IV(A) from (3R)-3-hydroxytetradecanoyl-[acyl-carrier-protein] and UDP-N-acetyl-alpha-D-glucosamine: step 1/6. Its function is as follows. Involved in the biosynthesis of lipid A, a phosphorylated glycolipid that anchors the lipopolysaccharide to the outer membrane of the cell. This chain is Acyl-[acyl-carrier-protein]--UDP-N-acetylglucosamine O-acyltransferase, found in Psychrobacter sp. (strain PRwf-1).